A 489-amino-acid polypeptide reads, in one-letter code: Homoserine O-acetyltransferase (489 aa).

An AB hydrolase-1 domain is found at 63-435 (NALVICHALS…SPEGHDAFLL (373 aa)). Residue Ser162 is part of the active site. Residue Ser162 is the Nucleophile of the active site. Positions 247 to 272 (RFGRNVPDPSKRQNINGTERLPTPPN) are disordered. Active-site residues include Asp401 and His430.

It belongs to the AB hydrolase superfamily. MetX family.

It catalyses the reaction L-homoserine + acetyl-CoA = O-acetyl-L-homoserine + CoA. It functions in the pathway amino-acid biosynthesis; L-methionine biosynthesis via de novo pathway; O-acetyl-L-homoserine from L-homoserine: step 1/1. In terms of biological role, commits homoserine to the methionine biosynthesis pathway by catalyzing its O-acetylation. This is Homoserine O-acetyltransferase (metE) from Emericella nidulans (strain FGSC A4 / ATCC 38163 / CBS 112.46 / NRRL 194 / M139) (Aspergillus nidulans).